The following is a 147-amino-acid chain: D-aminoacyl-tRNA deacylase (147 aa).

Residues 136-137 (GP) carry the Gly-cisPro motif, important for rejection of L-amino acids motif.

The protein belongs to the DTD family. Homodimer.

Its subcellular location is the cytoplasm. The enzyme catalyses glycyl-tRNA(Ala) + H2O = tRNA(Ala) + glycine + H(+). It catalyses the reaction a D-aminoacyl-tRNA + H2O = a tRNA + a D-alpha-amino acid + H(+). Its function is as follows. An aminoacyl-tRNA editing enzyme that deacylates mischarged D-aminoacyl-tRNAs. Also deacylates mischarged glycyl-tRNA(Ala), protecting cells against glycine mischarging by AlaRS. Acts via tRNA-based rather than protein-based catalysis; rejects L-amino acids rather than detecting D-amino acids in the active site. By recycling D-aminoacyl-tRNA to D-amino acids and free tRNA molecules, this enzyme counteracts the toxicity associated with the formation of D-aminoacyl-tRNA entities in vivo and helps enforce protein L-homochirality. The sequence is that of D-aminoacyl-tRNA deacylase from Streptococcus uberis (strain ATCC BAA-854 / 0140J).